A 431-amino-acid polypeptide reads, in one-letter code: Keratin, type I cytoskeletal 18 (431 aa).

The tract at residues 2–83 (SLRTSYSVRS…SGSTGEIMGN (82 aa)) is head. Phosphoserine is present on Ser-12. Position 13 is a phosphothreonine (Thr-13). Phosphoserine is present on residues Ser-22 and Ser-36. The coil 1A stretch occupies residues 84–119 (EKMAMQNLNDRLASYLEKVRILEQANSKLELKIREA). Residues 84–395 (EKMAMQNLND…RLLDGGDFKL (312 aa)) form the IF rod domain. Residues 120-136 (LEKRGPDVHDYSRFQPI) are linker 1. Positions 137–228 (VDELRKKIFD…KNHDNEVMEL (92 aa)) are coil 1B. Residues 229–252 (RNQISQSGVQVDVDAPKGQDLSQI) form a linker 12 region. A coil 2 region spans residues 253–390 (MEEIRAKYEK…IATYRRLLDG (138 aa)). Positions 391 to 431 (GDFKLQDALEEQKKVKVMTVTQTLVDGKVVSSSTETKERKL) are tail.

This sequence belongs to the intermediate filament family. As to quaternary structure, heterotetramer of two type I and two type II keratins. Keratin-18 associates with keratin-8. Post-translationally, proteolytically cleaved by caspases during epithelial cell apoptosis. In terms of tissue distribution, expressed in simple epithelia such as intestinal mucosa, bile duct, hepatocytes, renal tubules, endothelia, ocular lens epithelium, and in a variety of mesenchymally-derived cells such as blood vessel endothelia, pillar gill cells, optic nerve glial cells, fibroblasts, interstitial cells, chondrocytes and ovarian theca cells. Also expressed in epidermis, pharyngeal mucosa, mucosa of anterior esophagus, gill mucosa and cornea.

Functionally, when phosphorylated, plays a role in filament reorganization. This Danio rerio (Zebrafish) protein is Keratin, type I cytoskeletal 18.